Here is a 1955-residue protein sequence, read N- to C-terminus: 227 kDa spindle- and centromere-associated protein (1955 aa).

Coiled-coil stretches lie at residues 82 to 129 (KKRI…NDDV), 152 to 317 (EWAS…ELES), 385 to 1747 (VRNI…LIAL), and 1770 to 1813 (ERIV…ERFI). 2 disordered regions span residues 1865-1896 (PTEQHASRGKEAYRTSSTIKSSEGTTRESYTY) and 1912-1955 (MTSS…TFSE). Residues 1878–1896 (RTSSTIKSSEGTTRESYTY) are compositionally biased toward polar residues. A compositionally biased stretch (basic residues) spans 1938–1948 (RKSRPATRKQQ).

The protein resides in the cytoplasm. The protein localises to the cytoskeleton. It is found in the microtubule organizing center. Its subcellular location is the centrosome. It localises to the chromosome. The protein resides in the centromere. The protein localises to the kinetochore. It is found in the spindle. Functionally, may play a role in the organization of the spindle apparatus and its interaction with the centromeres. The sequence is that of 227 kDa spindle- and centromere-associated protein (PUMA1) from Parascaris univalens (Nematode worm).